The primary structure comprises 454 residues: Tryptophanase (454 aa).

Lysine 256 bears the N6-(pyridoxal phosphate)lysine mark.

This sequence belongs to the beta-eliminating lyase family. In terms of assembly, homotetramer. Pyridoxal 5'-phosphate is required as a cofactor.

The catalysed reaction is L-tryptophan + H2O = indole + pyruvate + NH4(+). It participates in amino-acid degradation; L-tryptophan degradation via pyruvate pathway; indole and pyruvate from L-tryptophan: step 1/1. This is Tryptophanase (tnaA) from Rhodobacter capsulatus (Rhodopseudomonas capsulata).